We begin with the raw amino-acid sequence, 344 residues long: Uroporphyrinogen decarboxylase (344 aa).

Substrate is bound by residues 23–27, Asp73, Tyr149, Thr204, and His321; that span reads RQAGR.

This sequence belongs to the uroporphyrinogen decarboxylase family. As to quaternary structure, homodimer.

It is found in the cytoplasm. It carries out the reaction uroporphyrinogen III + 4 H(+) = coproporphyrinogen III + 4 CO2. The protein operates within porphyrin-containing compound metabolism; protoporphyrin-IX biosynthesis; coproporphyrinogen-III from 5-aminolevulinate: step 4/4. In terms of biological role, catalyzes the decarboxylation of four acetate groups of uroporphyrinogen-III to yield coproporphyrinogen-III. This is Uroporphyrinogen decarboxylase from Francisella tularensis subsp. holarctica (strain LVS).